The chain runs to 337 residues: ERI1 exoribonuclease 3 (337 aa).

Residues 146–320 (FLVLDFEATC…DDCKNIANIM (175 aa)) enclose the Exonuclease domain. Residues aspartate 150, glutamate 152, and aspartate 249 each contribute to the Mg(2+) site. The active-site Proton acceptor is glutamate 152. Glutamate 152 contributes to the AMP binding site. The active-site Proton acceptor is histidine 307. Histidine 307 is an AMP binding site. Aspartate 312 provides a ligand contact to Mg(2+).

Interacts with PRNP. The cofactor is Mg(2+).

This is ERI1 exoribonuclease 3 (ERI3) from Bos taurus (Bovine).